Consider the following 190-residue polypeptide: NADH-quinone oxidoreductase subunit B (190 aa).

The [4Fe-4S] cluster site is built by cysteine 67, cysteine 68, cysteine 132, and cysteine 162.

The protein belongs to the complex I 20 kDa subunit family. As to quaternary structure, NDH-1 is composed of 14 different subunits. Subunits NuoB, C, D, E, F, and G constitute the peripheral sector of the complex. Requires [4Fe-4S] cluster as cofactor.

Its subcellular location is the cell inner membrane. The catalysed reaction is a quinone + NADH + 5 H(+)(in) = a quinol + NAD(+) + 4 H(+)(out). In terms of biological role, NDH-1 shuttles electrons from NADH, via FMN and iron-sulfur (Fe-S) centers, to quinones in the respiratory chain. The immediate electron acceptor for the enzyme in this species is believed to be ubiquinone. Couples the redox reaction to proton translocation (for every two electrons transferred, four hydrogen ions are translocated across the cytoplasmic membrane), and thus conserves the redox energy in a proton gradient. This Anaplasma marginale (strain Florida) protein is NADH-quinone oxidoreductase subunit B.